We begin with the raw amino-acid sequence, 122 residues long: Large-conductance mechanosensitive channel (122 aa).

2 helical membrane passes run 14–34 (VLDL…VKSL) and 67–87 (GAFL…FILI).

It belongs to the MscL family. In terms of assembly, homopentamer.

The protein localises to the cell membrane. Channel that opens in response to stretch forces in the membrane lipid bilayer. May participate in the regulation of osmotic pressure changes within the cell. The polypeptide is Large-conductance mechanosensitive channel (Lactococcus lactis subsp. lactis (strain IL1403) (Streptococcus lactis)).